Reading from the N-terminus, the 147-residue chain is Phosphoribosyl-AMP cyclohydrolase (147 aa).

Position 91 (D91) interacts with Mg(2+). C92 contributes to the Zn(2+) binding site. Mg(2+) contacts are provided by D93 and D95. Zn(2+)-binding residues include C108 and C115.

The protein belongs to the PRA-CH family. As to quaternary structure, homodimer. It depends on Mg(2+) as a cofactor. Zn(2+) is required as a cofactor.

It is found in the cytoplasm. The enzyme catalyses 1-(5-phospho-beta-D-ribosyl)-5'-AMP + H2O = 1-(5-phospho-beta-D-ribosyl)-5-[(5-phospho-beta-D-ribosylamino)methylideneamino]imidazole-4-carboxamide. It participates in amino-acid biosynthesis; L-histidine biosynthesis; L-histidine from 5-phospho-alpha-D-ribose 1-diphosphate: step 3/9. Functionally, catalyzes the hydrolysis of the adenine ring of phosphoribosyl-AMP. In Rhodopseudomonas palustris (strain BisB5), this protein is Phosphoribosyl-AMP cyclohydrolase.